Reading from the N-terminus, the 338-residue chain is Ketol-acid reductoisomerase (NADP(+)) (338 aa).

One can recognise a KARI N-terminal Rossmann domain in the interval 1–181; that stretch reads MKVYYENDAD…GGTKAGVIET (181 aa). Residues 24 to 27, lysine 47, serine 50, serine 52, and 82 to 85 contribute to the NADP(+) site; these read FGSQ and DQVQ. The active site involves histidine 107. Glycine 133 is a binding site for NADP(+). A KARI C-terminal knotted domain is found at 182–327; sequence NFKDETETDL…EKLRGMMSWL (146 aa). Residues aspartate 190, glutamate 194, glutamate 226, and glutamate 230 each coordinate Mg(2+). Serine 251 lines the substrate pocket.

Belongs to the ketol-acid reductoisomerase family. Mg(2+) is required as a cofactor.

It carries out the reaction (2R)-2,3-dihydroxy-3-methylbutanoate + NADP(+) = (2S)-2-acetolactate + NADPH + H(+). It catalyses the reaction (2R,3R)-2,3-dihydroxy-3-methylpentanoate + NADP(+) = (S)-2-ethyl-2-hydroxy-3-oxobutanoate + NADPH + H(+). The protein operates within amino-acid biosynthesis; L-isoleucine biosynthesis; L-isoleucine from 2-oxobutanoate: step 2/4. It participates in amino-acid biosynthesis; L-valine biosynthesis; L-valine from pyruvate: step 2/4. Functionally, involved in the biosynthesis of branched-chain amino acids (BCAA). Catalyzes an alkyl-migration followed by a ketol-acid reduction of (S)-2-acetolactate (S2AL) to yield (R)-2,3-dihydroxy-isovalerate. In the isomerase reaction, S2AL is rearranged via a Mg-dependent methyl migration to produce 3-hydroxy-3-methyl-2-ketobutyrate (HMKB). In the reductase reaction, this 2-ketoacid undergoes a metal-dependent reduction by NADPH to yield (R)-2,3-dihydroxy-isovalerate. The sequence is that of Ketol-acid reductoisomerase (NADP(+)) from Chloroherpeton thalassium (strain ATCC 35110 / GB-78).